A 275-amino-acid chain; its full sequence is Small ribosomal subunit protein uS3 (275 aa).

Residues 38–106 form the KH type-2 domain; sequence IRKLLATGLE…QVQLNILEVK (69 aa). Residues 215 to 275 are disordered; it reads AAAAPASDRP…AEAPAESTES (61 aa). Positions 237 to 275 are enriched in low complexity; the sequence is SGSAGTTATSTEAGRAATSDAPAAGTAAAAEAPAESTES.

The protein belongs to the universal ribosomal protein uS3 family. In terms of assembly, part of the 30S ribosomal subunit. Forms a tight complex with proteins S10 and S14.

Functionally, binds the lower part of the 30S subunit head. Binds mRNA in the 70S ribosome, positioning it for translation. This chain is Small ribosomal subunit protein uS3, found in Mycolicibacterium smegmatis (strain ATCC 700084 / mc(2)155) (Mycobacterium smegmatis).